Consider the following 350-residue polypeptide: DNA repair protein rhp55 (350 aa).

51–58 lines the ATP pocket; sequence GAPGMGKT. The segment at 331 to 350 is disordered; it reads QSIPTNSSQRRKRSILECES.

This sequence belongs to the RecA family. RAD55 subfamily.

Its subcellular location is the nucleus. In terms of biological role, required for radiation resistance and meiotic viability and acts in recombination and recombinational DNA repair pathways. In Schizosaccharomyces pombe (strain 972 / ATCC 24843) (Fission yeast), this protein is DNA repair protein rhp55 (rhp55).